The sequence spans 181 residues: Large ribosomal subunit protein uL6 (181 aa).

Belongs to the universal ribosomal protein uL6 family. In terms of assembly, part of the 50S ribosomal subunit.

This protein binds to the 23S rRNA, and is important in its secondary structure. It is located near the subunit interface in the base of the L7/L12 stalk, and near the tRNA binding site of the peptidyltransferase center. The sequence is that of Large ribosomal subunit protein uL6 from Synechococcus sp. (strain CC9605).